A 206-amino-acid polypeptide reads, in one-letter code: MRTRVKFCGITRREDAIQAIRLGADAIGLVFYPESPRAVSPQQAYQIVRELPPFVTVVGLFVNAASCYLQQILDKVPIDILQFHGEESPEECGYYGRSYIKAIRMAEGVDLPSLARSYESASALLLDAYQAGVPGGTGRAFDWRRIPKNFSKAVILAGGLTPENIAQAVRQVRPYAVDVSGGVERIKGVKDAAKMAAFMRGVDSVN.

This sequence belongs to the TrpF family.

It catalyses the reaction N-(5-phospho-beta-D-ribosyl)anthranilate = 1-(2-carboxyphenylamino)-1-deoxy-D-ribulose 5-phosphate. Its pathway is amino-acid biosynthesis; L-tryptophan biosynthesis; L-tryptophan from chorismate: step 3/5. The polypeptide is N-(5'-phosphoribosyl)anthranilate isomerase (Nitrosococcus oceani (strain ATCC 19707 / BCRC 17464 / JCM 30415 / NCIMB 11848 / C-107)).